The following is a 258-amino-acid chain: 5'-nucleotidase SurE (258 aa).

Positions 9, 10, 40, and 95 each coordinate a divalent metal cation.

The protein belongs to the SurE nucleotidase family. A divalent metal cation is required as a cofactor.

Its subcellular location is the cytoplasm. It catalyses the reaction a ribonucleoside 5'-phosphate + H2O = a ribonucleoside + phosphate. Functionally, nucleotidase that shows phosphatase activity on nucleoside 5'-monophosphates. The protein is 5'-nucleotidase SurE of Nitratiruptor sp. (strain SB155-2).